The primary structure comprises 30 residues: Cyclotide cycloviolacin O17 (30 aa).

The cyclopeptide (Gly-Asn) cross-link spans 1–30; it reads GIPCGESCVWIPCISAAIGCSCKNKVCYRN. 3 disulfide bridges follow: Cys-4–Cys-20, Cys-8–Cys-22, and Cys-13–Cys-27.

Post-translationally, this is a cyclic peptide.

In terms of biological role, probably participates in a plant defense mechanism. This chain is Cyclotide cycloviolacin O17, found in Psychotria brachyceras.